The primary structure comprises 1172 residues: Phytochrome B (1172 aa).

Positions 1-16 are enriched in gly residues; the sequence is MVSGVGGSGGGRGGGR. The interval 1–54 is disordered; it reads MVSGVGGSGGGRGGGRGGEEEPSSSHTPNNRRGGEQAQSSGTKSLRPRSNTESM. A compositionally biased stretch (polar residues) spans 24-54; it reads SSHTPNNRRGGEQAQSSGTKSLRPRSNTESM. The GAF domain maps to 252–433; that stretch reads DIKLLCDTVV…AFGLQLNMEL (182 aa). Residue Cys-357 participates in phytochromobilin binding. 2 consecutive PAS domains span residues 652–723 and 786–857; these read VARE…LRGD and DYKA…MIVL. In terms of domain architecture, Histidine kinase spans 934–1153; sequence YICQVIKNPL…LIILELPVPR (220 aa).

It belongs to the phytochrome family. In terms of assembly, homodimer. Interacts with ADO1 and PKS4. Stabilized by interactions with PAPP5 and FYPP3 which are enhanced in the phosphorylated Pfr form. Interacts with VOZ1 and VOZ2. Binds, via its photosensory domain, to PTAC12/HMR/PAP5 when photoactivated; this interaction stimulates its localization to photobodies. Interacts with CRY1 specifically when in the dark/far-red (Pr) state, but not when red light-activated (Pfr). Interacts with PIF4 and PIF5 in response to low blue light (LBL). Component of a red light-dependent nuclear complex made of PHL, PHYB and CO. Interacts directly with PHL. Binds to UNE10/PIF8 when red light-activated (Pfr). When light-activated, interacts with PCH1 and PCHL. Associated with DRT111/RSN2/SFPS, SMP2 and SWAP1 in nuclear photobodies upon response to red light (Pfr form). Contains one covalently linked phytochromobilin chromophore. As to expression, expressed in fruits, flowers, leaves, stems, seedlings and roots.

It localises to the cytoplasm. Its subcellular location is the nucleus. The protein resides in the nucleoplasm. The protein localises to the nucleus speckle. In terms of biological role, regulatory photoreceptor which exists in two forms that are reversibly interconvertible by light: the Pr form that absorbs maximally in the red region of the spectrum and the Pfr form that absorbs maximally in the far-red region. Photoconversion of Pr to Pfr induces an array of morphogenetic responses, whereas reconversion of Pfr to Pr cancels the induction of those responses. Pfr controls the expression of a number of nuclear genes including those encoding the small subunit of ribulose-bisphosphate carboxylase, chlorophyll A/B binding protein, protochlorophyllide reductase, rRNA, etc. It also controls the expression of its own gene(s) in a negative feedback fashion. Involved in the flowering time regulation. Involved in light-regulated circadian phase control that triggers stomatal aperture, stomatal conductance, and CO(2) assimilation. Implicated in red light perception, and, to a lower extent, in blue light signaling. Controls thermomorphogenesis in the daytime and regulates temperature responses by associating with the promoters of key target genes in a temperature-dependent manner and subsequently repressing their expression in a PIF4-dependent manner (temperature-responsive transcriptional regulator); this process requires PTAC12/HMR/PAP5 (transcriptional activator). Thermal timer that integrates temperature information over the course of the night. Detabilizes UNE10/PIF8 in red light. In Arabidopsis thaliana (Mouse-ear cress), this protein is Phytochrome B.